A 499-amino-acid chain; its full sequence is Centrosomal protein of 57 kDa (499 aa).

Polar residues predominate over residues 1–35 (MAAASVSETSASQFSNILAEPSKSNGSMVRHSSSP). A disordered region spans residues 1 to 58 (MAAASVSETSASQFSNILAEPSKSNGSMVRHSSSPYVVYPPDKPFLNSDLRRSPNKPT). Ser53 carries the phosphoserine modification. The tract at residues 58–239 (TFAYPESNSR…KAAQLQTGLE (182 aa)) is centrosome localization domain (CLD). Positions 63–241 (ESNSRAIFSA…AQLQTGLEVN (179 aa)) form a coiled coil. A mediates interaction with microtubules region spans residues 277-490 (AVQPHYRLCL…KDMQSIQNSL (214 aa)). Disordered stretches follow at residues 334–357 (KQVSSRTGKSKKSATPPSSSSVNE) and 431–476 (KQKK…SRKN). A compositionally biased stretch (low complexity) spans 346-357 (SATPPSSSSVNE). Positions 389–450 (TVELKDNLEC…KTLDEEGNSS (62 aa)) form a coiled coil. Basic and acidic residues predominate over residues 431–444 (KQKKELKATRKTLD). The segment covering 449 to 459 (SSSRSTTTGTT) has biased composition (low complexity). Positions 460–474 (NKKDFAKPRPGEKSR) are enriched in basic and acidic residues.

It belongs to the translokin family. In terms of assembly, homodimer and homooligomer. Interacts with FGF2 and RAP80. Does not interact with FGF1 or FGF2 isoform 24 kDa. Interacts with microtubules.

Its subcellular location is the nucleus. The protein localises to the cytoplasm. It is found in the cytoskeleton. It localises to the microtubule organizing center. The protein resides in the centrosome. Functionally, centrosomal protein which may be required for microtubule attachment to centrosomes. May act by forming ring-like structures around microtubules. Mediates nuclear translocation and mitogenic activity of the internalized growth factor FGF2. The protein is Centrosomal protein of 57 kDa (CEP57) of Bos taurus (Bovine).